Consider the following 37-residue polypeptide: Large ribosomal subunit protein bL36 (37 aa).

It belongs to the bacterial ribosomal protein bL36 family.

The sequence is that of Large ribosomal subunit protein bL36 from Methylibium petroleiphilum (strain ATCC BAA-1232 / LMG 22953 / PM1).